Consider the following 154-residue polypeptide: Myoglobin (154 aa).

The Globin domain occupies 2–148; sequence GLSDGEWQLV…FRKDIAAKYK (147 aa). Position 4 is a phosphoserine (Ser4). Nitrite is bound at residue His65. His65 provides a ligand contact to O2. The residue at position 68 (Thr68) is a Phosphothreonine. Residue His94 participates in heme b binding.

The protein belongs to the globin family. In terms of assembly, monomeric.

It localises to the cytoplasm. The protein resides in the sarcoplasm. It catalyses the reaction Fe(III)-heme b-[protein] + nitric oxide + H2O = Fe(II)-heme b-[protein] + nitrite + 2 H(+). It carries out the reaction H2O2 + AH2 = A + 2 H2O. Its function is as follows. Monomeric heme protein which primary function is to store oxygen and facilitate its diffusion within muscle tissues. Reversibly binds oxygen through a pentacoordinated heme iron and enables its timely and efficient release as needed during periods of heightened demand. Depending on the oxidative conditions of tissues and cells, and in addition to its ability to bind oxygen, it also has a nitrite reductase activity whereby it regulates the production of bioactive nitric oxide. Under stress conditions, like hypoxia and anoxia, it also protects cells against reactive oxygen species thanks to its pseudoperoxidase activity. The chain is Myoglobin (MB) from Delphinus delphis (Short-beaked common dolphin).